A 364-amino-acid chain; its full sequence is Chaperone protein DnaJ (364 aa).

Residues 5 to 71 (DYYEILGVAK…QKRQAYDQFG (67 aa)) enclose the J domain. A CR-type zinc finger spans residues 127 to 205 (GSTVKIRIPK…CRGQGLVRKQ (79 aa)). Residues Cys-140, Cys-143, Cys-157, Cys-160, Cys-179, Cys-182, Cys-193, and Cys-196 each contribute to the Zn(2+) site. CXXCXGXG motif repeat units lie at residues 140–147 (CDTCSGIG), 157–164 (CSICSGVG), 179–186 (CGTCSGTG), and 193–200 (CGTCRGQG).

This sequence belongs to the DnaJ family. In terms of assembly, homodimer. The cofactor is Zn(2+).

The protein localises to the cytoplasm. In terms of biological role, participates actively in the response to hyperosmotic and heat shock by preventing the aggregation of stress-denatured proteins and by disaggregating proteins, also in an autonomous, DnaK-independent fashion. Unfolded proteins bind initially to DnaJ; upon interaction with the DnaJ-bound protein, DnaK hydrolyzes its bound ATP, resulting in the formation of a stable complex. GrpE releases ADP from DnaK; ATP binding to DnaK triggers the release of the substrate protein, thus completing the reaction cycle. Several rounds of ATP-dependent interactions between DnaJ, DnaK and GrpE are required for fully efficient folding. Also involved, together with DnaK and GrpE, in the DNA replication of plasmids through activation of initiation proteins. In Ruthia magnifica subsp. Calyptogena magnifica, this protein is Chaperone protein DnaJ.